A 977-amino-acid chain; its full sequence is Alanine--tRNA ligase (977 aa).

The segment at serine 512–serine 535 is disordered. Zn(2+) contacts are provided by histidine 618, histidine 622, cysteine 720, and histidine 724.

This sequence belongs to the class-II aminoacyl-tRNA synthetase family. The cofactor is Zn(2+).

The protein resides in the cytoplasm. It catalyses the reaction tRNA(Ala) + L-alanine + ATP = L-alanyl-tRNA(Ala) + AMP + diphosphate. Functionally, catalyzes the attachment of alanine to tRNA(Ala) in a two-step reaction: alanine is first activated by ATP to form Ala-AMP and then transferred to the acceptor end of tRNA(Ala). Also edits incorrectly charged Ser-tRNA(Ala) and Gly-tRNA(Ala) via its editing domain. This chain is Alanine--tRNA ligase, found in Leptospira interrogans serogroup Icterohaemorrhagiae serovar copenhageni (strain Fiocruz L1-130).